The following is a 569-amino-acid chain: Arginine--tRNA ligase (569 aa).

The 'HIGH' region signature appears at 123-133 (ANPNGPLHVGH).

This sequence belongs to the class-I aminoacyl-tRNA synthetase family.

The protein localises to the cytoplasm. The enzyme catalyses tRNA(Arg) + L-arginine + ATP = L-arginyl-tRNA(Arg) + AMP + diphosphate. The polypeptide is Arginine--tRNA ligase (Methanosarcina barkeri (strain Fusaro / DSM 804)).